A 1014-amino-acid polypeptide reads, in one-letter code: Probable LRR receptor-like serine/threonine-protein kinase At1g07650 (1014 aa).

The signal sequence occupies residues 1–23 (MIYLHRIYFIIVLFTLIFHGRLG). The Extracellular segment spans residues 24-619 (FSDNNKLHEA…KPPVYYDTKD (596 aa)). N-linked (GlcNAc...) asparagine glycosylation is found at asparagine 76, asparagine 87, and asparagine 101. LRR repeat units lie at residues 89 to 112 (SCHVIRIALKSQNLTGIVPPEFSK), 113 to 137 (LRHLKVLDLSRNSLTGSIPKEWASM), 139 to 160 (LEDLSFMGNRLSGPFPKVLTRL), 161 to 184 (TMLRNLSLEGNQFSGPIPPDIGQL), 186 to 207 (HLEKLHLPSNAFTGPLTEKLGL), 208 to 234 (LKNLTDMRISDNNFTGPIPDFISNWTR), 256 to 279 (LTSLTDLRISDLGGKPSSFPPLKN), 280 to 304 (LESIKTLILRKCKIIGPIPKYIGDL), 305 to 327 (KKLKTLDLSFNLLSGEIPSSFEN), 329 to 352 (KKADFIYLTGNKLTGGVPNYFVER), and 354 to 376 (KNVDVSFNNFTDESSIPSHDCNR). The N-linked (GlcNAc...) asparagine glycan is linked to asparagine 165. Residues asparagine 210, asparagine 220, and asparagine 231 are each glycosylated (N-linked (GlcNAc...) asparagine). 5 N-linked (GlcNAc...) asparagine glycosylation sites follow: asparagine 362, asparagine 389, asparagine 474, asparagine 481, and asparagine 511. One copy of the LRR 12 repeat lies at 516–539 (LHFAEIIFTDDNTLYSLGKRLFDI). The N-linked (GlcNAc...) asparagine glycan is linked to asparagine 570. Residues 620-640 (IILKVGVPVAAATLLLFIIVG) traverse the membrane as a helical segment. Residues 641-1014 (VFWKKRRDKN…DAEEKTGLLD (374 aa)) lie on the Cytoplasmic side of the membrane. Threonine 667 is modified (phosphothreonine). The Protein kinase domain maps to 678–960 (FDVTRKIGEG…EGKTAMQELL (283 aa)). ATP contacts are provided by residues 684-692 (IGEGGFGSV) and lysine 706. Residue tyrosine 751 is modified to Phosphotyrosine. Aspartate 805 acts as the Proton acceptor in catalysis. Phosphoserine occurs at positions 809 and 838. Phosphothreonine is present on residues threonine 839 and threonine 844. Tyrosine 852 carries the post-translational modification Phosphotyrosine. Serine 989 is modified (phosphoserine). Positions 989 to 1002 (SFSTSGPRTASANS) are enriched in polar residues. Positions 989–1014 (SFSTSGPRTASANSLVDAEEKTGLLD) are disordered.

It belongs to the protein kinase superfamily. Ser/Thr protein kinase family.

It localises to the membrane. The catalysed reaction is L-seryl-[protein] + ATP = O-phospho-L-seryl-[protein] + ADP + H(+). The enzyme catalyses L-threonyl-[protein] + ATP = O-phospho-L-threonyl-[protein] + ADP + H(+). This Arabidopsis thaliana (Mouse-ear cress) protein is Probable LRR receptor-like serine/threonine-protein kinase At1g07650.